We begin with the raw amino-acid sequence, 283 residues long: Acetylglutamate kinase (283 aa).

Residues 63–64 (GG), Arg-85, and Asn-178 contribute to the substrate site.

It belongs to the acetylglutamate kinase family. ArgB subfamily.

The protein resides in the cytoplasm. The catalysed reaction is N-acetyl-L-glutamate + ATP = N-acetyl-L-glutamyl 5-phosphate + ADP. It functions in the pathway amino-acid biosynthesis; L-arginine biosynthesis; N(2)-acetyl-L-ornithine from L-glutamate: step 2/4. In terms of biological role, catalyzes the ATP-dependent phosphorylation of N-acetyl-L-glutamate. This is Acetylglutamate kinase from Prochlorococcus marinus (strain MIT 9301).